The primary structure comprises 258 residues: uncharacterized protein (258 aa).

The next 6 membrane-spanning stretches (helical) occupy residues 21 to 41, 73 to 93, 119 to 139, 153 to 173, 182 to 202, and 229 to 249; these read LIWLPIAMMIVGLTQPLTIYY, LSQFNTLGMALVIFSVMGSVA, WLIQSVIGIMSFAAGYGLAYY, FAASLGLYALWVIFIVTAGLA, GAAAACGIGLTAAVSFAVSLF, and FFGWSLTFSILCIMLLAVFSV.

The protein resides in the cell membrane. This is an uncharacterized protein from Bacillus subtilis (strain 168).